Here is a 1258-residue protein sequence, read N- to C-terminus: Plasma membrane calcium-transporting ATPase 3 (1258 aa).

Residues 1 to 19 (MGDMANSSIEFHPKPQQQR) show a composition bias toward polar residues. The disordered stretch occupies residues 1–22 (MGDMANSSIEFHPKPQQQREVP). Topologically, residues 1 to 97 (MGDMANSSIE…NFIPPKQPKT (97 aa)) are cytoplasmic. Ser8 bears the Phosphoserine mark. The chain crosses the membrane as a helical span at residues 98–118 (FLQLVWEALQDVTLIILEVAA). The Extracellular segment spans residues 119 to 155 (IVSLGLSFYAPPGEESEACGNVSGGAEDEGEAEAGWI). The chain crosses the membrane as a helical span at residues 156 to 176 (EGAAILLSVICVVLVTAFNDW). Over 177 to 364 (SKEKQFRGLQ…KEKSVLQGKL (188 aa)) the chain is Cytoplasmic. 2 disordered regions span residues 298 to 328 (EEEK…GAVA) and 335 to 354 (KSAE…NVPK). 2 stretches are compositionally biased toward basic and acidic residues: residues 299-308 (EEKKDKKGKQ) and 342-354 (MEER…NVPK). The chain crosses the membrane as a helical span at residues 365-384 (TKLAVQIGKAGLVMSAITVI). Over 385 to 417 (ILVLYFVIETFVVDGRVWLAECTPVYVQYFVKF) the chain is Extracellular. The helical transmembrane segment at 418 to 435 (FIIGVTVLVVAVPEGLPL) threads the bilayer. Residues 436–849 (AVTISLAYSV…MWGRNVYDSI (414 aa)) are Cytoplasmic-facing. The 4-aspartylphosphate intermediate role is filled by Asp473. Residues Asp794 and Asp798 each coordinate Mg(2+). A helical transmembrane segment spans residues 850–869 (SKFLQFQLTVNVVAVIVAFT). The Extracellular segment spans residues 870–879 (GACITQDSPL). The chain crosses the membrane as a helical span at residues 880–900 (KAVQMLWVNLIMDTFASLALA). Residues 901 to 920 (TEPPTESLLLRKPYGRDKPL) are Cytoplasmic-facing. A helical transmembrane segment spans residues 921–943 (ISRTMMKNILGHAVYQLTIIFTL). Topologically, residues 944-961 (LFVGELFFDIDSGRNAPL) are extracellular. A helical membrane pass occupies residues 962–983 (HSPPSEHYTIIFNTFVMMQLFN). The Cytoplasmic segment spans residues 984–1002 (EINARKIHGERNVFDGIFS). A helical membrane pass occupies residues 1003–1024 (NPIFCTIVLGTFGIQIVIVQFG). At 1025 to 1034 (GKPFSCSPLS) the chain is on the extracellular side. A helical membrane pass occupies residues 1035 to 1056 (TEQWLWCLFVGVGELVWGQVIA). Topologically, residues 1057–1258 (TIPTSQLKCL…SPLHSMETSL (202 aa)) are cytoplasmic. Thr1079 is modified (phosphothreonine). The calmodulin-binding subdomain A stretch occupies residues 1097–1114 (LRRGQILWFRGLNRIQTQ). Phosphothreonine; by PKC is present on Thr1113. The interval 1115-1124 (MEVVSTFKRS) is calmodulin-binding subdomain B. Ser1126 is subject to Phosphoserine. The tract at residues 1204-1258 (ENEERLRAPPPPPPNQNNNAIDSGIYLTTHATKSATSSAFSSRPGSPLHSMETSL) is disordered. The span at 1231-1245 (TTHATKSATSSAFSS) shows a compositional bias: low complexity.

Belongs to the cation transport ATPase (P-type) (TC 3.A.3) family. Type IIB subfamily. Interacts with PDZD11. Interacts (via N-terminus) with YWHAE. Expressed predominantly in brain and skeletal muscle. Expressed in the molecular layer of the cerebellar cortex, in particular in granule cells (at protein level). Expressed in aldosterone producing glomerulosa cells of adrenal glands (at protein level). Detected at low levels in various tissues including testis, stomach, small intestine, and large intestine. In terms of tissue distribution, most abundant form in brain and most other tissues. As to expression, most abundant form in skeletal muscle and is also found in brain and at low levels in testis and kidney.

It localises to the cell membrane. It is found in the presynaptic cell membrane. The catalysed reaction is Ca(2+)(in) + ATP + H2O = Ca(2+)(out) + ADP + phosphate + H(+). In terms of biological role, ATP-driven Ca(2+) ion pump involved in the maintenance of basal intracellular Ca(2+) levels at the presynaptic terminals. Uses ATP as an energy source to transport cytosolic Ca(2+) ions across the plasma membrane to the extracellular compartment. May counter-transport protons, but the mechanism and the stoichiometry of this Ca(2+)/H(+) exchange remains to be established. This chain is Plasma membrane calcium-transporting ATPase 3 (Atp2b3), found in Rattus norvegicus (Rat).